Here is a 280-residue protein sequence, read N- to C-terminus: UPF0276 protein NMA0228 (280 aa).

It belongs to the UPF0276 family.

The sequence is that of UPF0276 protein NMA0228 from Neisseria meningitidis serogroup A / serotype 4A (strain DSM 15465 / Z2491).